The primary structure comprises 462 residues: tRNA modification GTPase MnmE (462 aa).

Positions 27, 89, and 128 each coordinate (6S)-5-formyl-5,6,7,8-tetrahydrofolate. Positions 224–383 (GLATAIVGRP…LEAQIAKLFF (160 aa)) constitute a TrmE-type G domain. Asn234 contributes to the K(+) binding site. Residues 234 to 239 (NVGKSS), 253 to 259 (TDVAGTT), and 278 to 281 (DTAG) contribute to the GTP site. Mg(2+) is bound at residue Ser238. Positions 253, 255, and 258 each coordinate K(+). Thr259 is a Mg(2+) binding site. Lys462 serves as a coordination point for (6S)-5-formyl-5,6,7,8-tetrahydrofolate.

This sequence belongs to the TRAFAC class TrmE-Era-EngA-EngB-Septin-like GTPase superfamily. TrmE GTPase family. In terms of assembly, homodimer. Heterotetramer of two MnmE and two MnmG subunits. The cofactor is K(+).

The protein resides in the cytoplasm. Its function is as follows. Exhibits a very high intrinsic GTPase hydrolysis rate. Involved in the addition of a carboxymethylaminomethyl (cmnm) group at the wobble position (U34) of certain tRNAs, forming tRNA-cmnm(5)s(2)U34. This Latilactobacillus sakei subsp. sakei (strain 23K) (Lactobacillus sakei subsp. sakei) protein is tRNA modification GTPase MnmE.